Reading from the N-terminus, the 166-residue chain is Cyclic pyranopterin monophosphate synthase (166 aa).

Substrate is bound by residues 83 to 85 (LCH) and 121 to 122 (ME). Aspartate 136 is an active-site residue.

The protein belongs to the MoaC family. As to quaternary structure, homohexamer; trimer of dimers.

It carries out the reaction (8S)-3',8-cyclo-7,8-dihydroguanosine 5'-triphosphate = cyclic pyranopterin phosphate + diphosphate. Its pathway is cofactor biosynthesis; molybdopterin biosynthesis. In terms of biological role, catalyzes the conversion of (8S)-3',8-cyclo-7,8-dihydroguanosine 5'-triphosphate to cyclic pyranopterin monophosphate (cPMP). The chain is Cyclic pyranopterin monophosphate synthase from Trichodesmium erythraeum (strain IMS101).